Consider the following 79-residue polypeptide: Acyl carrier protein (79 aa).

A Carrier domain is found at 2–77 (SDIEARVKKI…LAIDYAKNNV (76 aa)). Position 37 is an O-(pantetheine 4'-phosphoryl)serine (serine 37).

It belongs to the acyl carrier protein (ACP) family. In terms of processing, 4'-phosphopantetheine is transferred from CoA to a specific serine of apo-ACP by AcpS. This modification is essential for activity because fatty acids are bound in thioester linkage to the sulfhydryl of the prosthetic group.

The protein localises to the cytoplasm. It functions in the pathway lipid metabolism; fatty acid biosynthesis. Functionally, carrier of the growing fatty acid chain in fatty acid biosynthesis. This chain is Acyl carrier protein, found in Leptothrix cholodnii (strain ATCC 51168 / LMG 8142 / SP-6) (Leptothrix discophora (strain SP-6)).